The following is a 342-amino-acid chain: Phenylalanine--tRNA ligase alpha subunit (342 aa).

Residue Glu-255 participates in Mg(2+) binding.

The protein belongs to the class-II aminoacyl-tRNA synthetase family. Phe-tRNA synthetase alpha subunit type 1 subfamily. Tetramer of two alpha and two beta subunits. Mg(2+) is required as a cofactor.

Its subcellular location is the cytoplasm. The enzyme catalyses tRNA(Phe) + L-phenylalanine + ATP = L-phenylalanyl-tRNA(Phe) + AMP + diphosphate + H(+). This Pelodictyon phaeoclathratiforme (strain DSM 5477 / BU-1) protein is Phenylalanine--tRNA ligase alpha subunit.